A 407-amino-acid chain; its full sequence is CCCH-type zinc finger protein oma-1 (407 aa).

Residues 1 to 39 (MNVNGENNEKIDEHHLESSLAGVPTLPVSPLDHAKDLSQ) form a disordered region. A compositionally biased stretch (basic and acidic residues) spans 7–17 (NNEKIDEHHLE). The interval 46–80 (IGDLVTQTANLIAIKKQLLEDIAFNQHIQSMQVRA) is required for taf-4 binding. C3H1-type zinc fingers lie at residues 112-140 (SYKT…HGEE) and 154-182 (KYKT…HPDH). Threonine 239 carries the phosphothreonine; by mbk-2 and GSK3 modification. The residue at position 302 (serine 302) is a Phosphoserine; by mbk-2. Threonine 339 bears the Phosphothreonine; by GSK3 mark.

In terms of assembly, interacts with taf-4 (via C-terminus). Interacts with ifet-1. Component of a ribonucleoprotein particle complex that interacts with cgh-1 and car-1 in an RNA-dependent manner. Association with many proteins is dependent on the presence of RNA. In terms of processing, phosphorylation by mbk-2 and by gsk-3 are required for its rapid degradation following meiosis II. As to expression, exclusively expressed in the hermaphrodite gonad. Expressed prior to oocyte division. Widely distributed throughout gonadal oocytes from the mitotic stage to the developing diakinesis stage. Expressed in sperm.

The protein localises to the cytoplasm. The protein resides in the cytoplasmic granule. It localises to the nucleus. Zinc-finger RNA-binding protein that binds to 5'-UA[AU]-3' motifs in the 3'-UTR of maternal mRNAs to suppress translation in oocytes and embryos. Acts as a ribonucleoprotein particle component that may exert part of its function within cytoplasmic foci of unfertilized oocytes. Acts redundantly with oma-2 to control the temporal expression and distribution of maternal proteins and thereby promote meiotic progression, oocyte maturation, fertilization and embryonic development. Recruits the translational repressor ifet-1 to the 3'-UTR of mei-1 and zif-1 to negatively regulate their translation. By suppressing the translation of the E3 ligase zif-1, may in turn play a role in the stabilization of zif-1 targets such as the maternal transcriptional repressor protein pie-1. Following fertilization, sequesters the transcription initiation factor, taf-4, in the cytoplasm, which prevents its nuclear localization and thus allows for transcriptional suppression in early embryos, but not in oocytes. Also, together with oma-2, is involved in P-granule distribution during embryonic development. The protein is CCCH-type zinc finger protein oma-1 of Caenorhabditis elegans.